Reading from the N-terminus, the 256-residue chain is Ribonuclease HII (256 aa).

Residues 67–255 (QLVGGVDEVG…VSEMVGLKKA (189 aa)) form the RNase H type-2 domain. 3 residues coordinate a divalent metal cation: D73, E74, and D165.

This sequence belongs to the RNase HII family. It depends on Mn(2+) as a cofactor. Mg(2+) is required as a cofactor.

It is found in the cytoplasm. The enzyme catalyses Endonucleolytic cleavage to 5'-phosphomonoester.. Functionally, endonuclease that specifically degrades the RNA of RNA-DNA hybrids. This Lactobacillus delbrueckii subsp. bulgaricus (strain ATCC 11842 / DSM 20081 / BCRC 10696 / JCM 1002 / NBRC 13953 / NCIMB 11778 / NCTC 12712 / WDCM 00102 / Lb 14) protein is Ribonuclease HII.